Consider the following 648-residue polypeptide: Transcription termination factor FttA (648 aa).

The segment at 1-179 (MIKRETQVDQ…QVGRNIYRKP (179 aa)) is not required for dimerization, required for cleavage at some sites. Positions 9-76 (DQILKDIRGI…ISIRPDPDVL (68 aa)) are KHa. Residues 77-144 (LPPEEAEKLI…WAPKVVRTPP (68 aa)) are KHb. The segment at 185–395 (WIRITGLGGF…LVMESTYGGA (211 aa)) is metallo-beta-lactamase N-terminus. 6 residues coordinate Zn(2+): histidine 253, histidine 255, aspartate 257, histidine 258, histidine 341, and aspartate 364. Residues 396-589 (NDIQMPREEA…MEVHTIDGFS (194 aa)) form a beta-Casp region. The segment at 590-648 (GHADRRELMNYVAKVRPRPERVITVHGEPQKCLDLATSIHRKFGLSTRAPNNLDTIRLR) is metallo-beta-lactamase C-terminus. Residue histidine 615 coordinates Zn(2+).

This sequence belongs to the metallo-beta-lactamase superfamily. RNA-metabolizing metallo-beta-lactamase-like family. FttA subfamily. Homodimer. Interacts with RNA polymerase (RNAP), interacts with the Spt4-Spt5 complex. Requires Zn(2+) as cofactor.

Its activity is regulated as follows. EndoRNase activity is inhibited by 1,10-phenanthroline. In terms of biological role, terminates transcription on the whole genome. Termination is linked to FttA-mediated RNA cleavage and does not require NTP hydrolysis. Cleaves endonucleolytically at the RNA exit channel of RNA polymerase (RNAP); the 5'-3' exonuclease activity of this protein degrades the nascent RNA released from RNAP. Its function is as follows. A single-stranded endoribonuclease (endoRNase) with a preference for cleavage at CA dinucleotides. Has 5'-3' exoribonuclease (exoRNase) activity on 5'-monophosphorylated RNA; this activity does not occur on 5'-tri-phosphorylated or 5'-OH substrates. Also has weak activity 5'-3' exodeoxyribonuclease activity on ssDNA. This chain is Transcription termination factor FttA, found in Pyrococcus abyssi (strain GE5 / Orsay).